We begin with the raw amino-acid sequence, 171 residues long: Sec-independent protein translocase protein TatB (171 aa).

A helical transmembrane segment spans residues 2 to 22; sequence FDGIGFMELLLIGVLGLVVLG. Residues 69-171 are disordered; it reads SKGLSNLSPE…DTRSNPKANG (103 aa). Over residues 88–97 the composition is skewed to polar residues; it reads QAAQSVNRPY. Low complexity-rich tracts occupy residues 114 to 130 and 138 to 158; these read HSPV…HTSP and PTAT…SEPS. Positions 160-171 are enriched in polar residues; the sequence is GADTRSNPKANG.

It belongs to the TatB family. The Tat system comprises two distinct complexes: a TatABC complex, containing multiple copies of TatA, TatB and TatC subunits, and a separate TatA complex, containing only TatA subunits. Substrates initially bind to the TatABC complex, which probably triggers association of the separate TatA complex to form the active translocon.

It is found in the cell inner membrane. Part of the twin-arginine translocation (Tat) system that transports large folded proteins containing a characteristic twin-arginine motif in their signal peptide across membranes. Together with TatC, TatB is part of a receptor directly interacting with Tat signal peptides. TatB may form an oligomeric binding site that transiently accommodates folded Tat precursor proteins before their translocation. In Shewanella baltica (strain OS185), this protein is Sec-independent protein translocase protein TatB.